The following is a 47-amino-acid chain: Cytochrome b559 subunit beta (47 aa).

A helical membrane pass occupies residues 23–39; it reads WLAVHALAIPSVFFLGA. His27 provides a ligand contact to heme.

This sequence belongs to the PsbE/PsbF family. Heterodimer of an alpha subunit and a beta subunit. PSII is composed of 1 copy each of membrane proteins PsbA, PsbB, PsbC, PsbD, PsbE, PsbF, PsbH, PsbI, PsbJ, PsbK, PsbL, PsbM, PsbT, PsbX, PsbY, Psb30/Ycf12, peripheral proteins PsbO, CyanoQ (PsbQ), PsbU, PsbV and a large number of cofactors. It forms dimeric complexes. The cofactor is heme b.

The protein localises to the cellular thylakoid membrane. In terms of biological role, this b-type cytochrome is tightly associated with the reaction center of photosystem II (PSII). PSII is a light-driven water:plastoquinone oxidoreductase that uses light energy to abstract electrons from H(2)O, generating O(2) and a proton gradient subsequently used for ATP formation. It consists of a core antenna complex that captures photons, and an electron transfer chain that converts photonic excitation into a charge separation. The chain is Cytochrome b559 subunit beta from Prochlorococcus marinus subsp. pastoris (strain CCMP1986 / NIES-2087 / MED4).